The sequence spans 436 residues: Protein Z-dependent protease inhibitor (436 aa).

Residues 1 to 20 form the signal peptide; it reads MRVVSSLFLPVLLAEVWLVS. 3 N-linked (GlcNAc...) asparagine glycosylation sites follow: Asn23, Asn42, and Asn69. Positions 128-145 are heparin-binding; it reads AGPLILPALFKRVKETFS. Asn172, Asn189, and Asn287 each carry an N-linked (GlcNAc...) asparagine glycan.

The protein belongs to the serpin family. Phosphorylated by FAM20C in the extracellular medium. As to expression, expressed by the liver and secreted in plasma.

Its subcellular location is the secreted. Inhibits activity of the coagulation protease factor Xa in the presence of PROZ, calcium and phospholipids. Also inhibits factor XIa in the absence of cofactors. This chain is Protein Z-dependent protease inhibitor (Serpina10), found in Rattus norvegicus (Rat).